A 352-amino-acid polypeptide reads, in one-letter code: S-adenosylmethionine:tRNA ribosyltransferase-isomerase (352 aa).

The protein belongs to the QueA family. In terms of assembly, monomer.

It is found in the cytoplasm. It carries out the reaction 7-aminomethyl-7-carbaguanosine(34) in tRNA + S-adenosyl-L-methionine = epoxyqueuosine(34) in tRNA + adenine + L-methionine + 2 H(+). The protein operates within tRNA modification; tRNA-queuosine biosynthesis. In terms of biological role, transfers and isomerizes the ribose moiety from AdoMet to the 7-aminomethyl group of 7-deazaguanine (preQ1-tRNA) to give epoxyqueuosine (oQ-tRNA). In Paraburkholderia xenovorans (strain LB400), this protein is S-adenosylmethionine:tRNA ribosyltransferase-isomerase.